The following is a 237-amino-acid chain: High-affinity branched-chain amino acid transport ATP-binding protein LivF (237 aa).

One can recognise an ABC transporter domain in the interval 6–237; sequence LSFDKVSAHY…EAVRSAYLGG (232 aa). Residue 38–45 participates in ATP binding; the sequence is GANGAGKT.

The protein belongs to the ABC transporter superfamily.

Functionally, component of the leucine-specific transport system. This chain is High-affinity branched-chain amino acid transport ATP-binding protein LivF (livF), found in Escherichia coli (strain K12).